The chain runs to 187 residues: Elongation factor P (187 aa).

Belongs to the elongation factor P family.

It localises to the cytoplasm. Its pathway is protein biosynthesis; polypeptide chain elongation. Involved in peptide bond synthesis. Stimulates efficient translation and peptide-bond synthesis on native or reconstituted 70S ribosomes in vitro. Probably functions indirectly by altering the affinity of the ribosome for aminoacyl-tRNA, thus increasing their reactivity as acceptors for peptidyl transferase. The sequence is that of Elongation factor P from Brachyspira hyodysenteriae (strain ATCC 49526 / WA1).